Consider the following 312-residue polypeptide: MLLGGRPLHLLVLGVMGAYAGLGAYYATVARLPHPVVYAALPLGEDAAGGAPDWEAFNATAIYVAPNETDALSPALRDRARVVYARRDCRAYLWDVHFRLAAVAWLLYAAFVYARQERRMFGPFRDPAEFLTPEKYTLNYAASVLAATVIGCSYTKFAWYMAELATRRAALSRDLREDPITLAHRHPTLIALILLELGLRLGARMALFTTLGVTRAPCALVFPLYARALVWIFVLAVGALELLAATLPHIARVSGATATPARSDGGRAALGVCGACCSTVLAGIFAKALYLCLLVGGVLLFLHYERHITIFG.

An N-terminal signal peptide occupies residues 1–20 (MLLGGRPLHLLVLGVMGAYA). Topologically, residues 21–91 (GLGAYYATVA…VVYARRDCRA (71 aa)) are extracellular. N-linked (GlcNAc...) asparagine; by host glycosylation is found at N58 and N67. A helical membrane pass occupies residues 92–112 (YLWDVHFRLAAVAWLLYAAFV). Residues 113-187 (YARQERRMFG…DPITLAHRHP (75 aa)) are Cytoplasmic-facing. A helical transmembrane segment spans residues 188–208 (TLIALILLELGLRLGARMALF). Residues 209–227 (TTLGVTRAPCALVFPLYAR) lie on the Extracellular side of the membrane. The helical transmembrane segment at 228 to 248 (ALVWIFVLAVGALELLAATLP) threads the bilayer. Over 249-280 (HIARVSGATATPARSDGGRAALGVCGACCSTV) the chain is Cytoplasmic. The helical transmembrane segment at 281–301 (LAGIFAKALYLCLLVGGVLLF) threads the bilayer. Topologically, residues 302–312 (LHYERHITIFG) are extracellular.

The protein belongs to the alphaherpesvirinae glycoprotein K family. In terms of assembly, interacts (via UL20 interaction region) with protein UL20 homolog (via N-terminus); this interaction probably plays a role in the coordinate transport of protein UL20 homolog and gK to the trans-Golgi network (TGN), and is required for the cell surface expression of gK. Post-translationally, N-glycosylated.

Its subcellular location is the host cell membrane. The protein localises to the host endosome membrane. The protein resides in the host Golgi apparatus membrane. In terms of biological role, glycoprotein that probably modulates membrane fusion events during secondary envelopment of cytoplasmic capsids that bud into specific trans-Golgi network (TGN)-derived membranes. In Sus scrofa (Pig), this protein is Envelope glycoprotein K (gK).